Here is a 256-residue protein sequence, read N- to C-terminus: Thiazole synthase (256 aa).

Lys95 acts as the Schiff-base intermediate with DXP in catalysis. 1-deoxy-D-xylulose 5-phosphate-binding positions include Gly156, 182–183 (AG), and 204–205 (NT).

The protein belongs to the ThiG family. Homotetramer. Forms heterodimers with either ThiH or ThiS.

Its subcellular location is the cytoplasm. It carries out the reaction [ThiS sulfur-carrier protein]-C-terminal-Gly-aminoethanethioate + 2-iminoacetate + 1-deoxy-D-xylulose 5-phosphate = [ThiS sulfur-carrier protein]-C-terminal Gly-Gly + 2-[(2R,5Z)-2-carboxy-4-methylthiazol-5(2H)-ylidene]ethyl phosphate + 2 H2O + H(+). The protein operates within cofactor biosynthesis; thiamine diphosphate biosynthesis. Catalyzes the rearrangement of 1-deoxy-D-xylulose 5-phosphate (DXP) to produce the thiazole phosphate moiety of thiamine. Sulfur is provided by the thiocarboxylate moiety of the carrier protein ThiS. In vitro, sulfur can be provided by H(2)S. The sequence is that of Thiazole synthase from Escherichia fergusonii (strain ATCC 35469 / DSM 13698 / CCUG 18766 / IAM 14443 / JCM 21226 / LMG 7866 / NBRC 102419 / NCTC 12128 / CDC 0568-73).